A 250-amino-acid polypeptide reads, in one-letter code: Ribonuclease PH (250 aa).

Residues Arg-86 and 124–126 (GTR) contribute to the phosphate site.

This sequence belongs to the RNase PH family. In terms of assembly, homohexameric ring arranged as a trimer of dimers.

It carries out the reaction tRNA(n+1) + phosphate = tRNA(n) + a ribonucleoside 5'-diphosphate. Functionally, phosphorolytic 3'-5' exoribonuclease that plays an important role in tRNA 3'-end maturation. Removes nucleotide residues following the 3'-CCA terminus of tRNAs; can also add nucleotides to the ends of RNA molecules by using nucleoside diphosphates as substrates, but this may not be physiologically important. Probably plays a role in initiation of 16S rRNA degradation (leading to ribosome degradation) during starvation. The polypeptide is Ribonuclease PH (Shouchella clausii (strain KSM-K16) (Alkalihalobacillus clausii)).